We begin with the raw amino-acid sequence, 173 residues long: Crossover junction endodeoxyribonuclease RuvC (173 aa).

Catalysis depends on residues D11, E71, and D143. Residues D11, E71, and D143 each contribute to the Mg(2+) site.

Belongs to the RuvC family. Homodimer which binds Holliday junction (HJ) DNA. The HJ becomes 2-fold symmetrical on binding to RuvC with unstacked arms; it has a different conformation from HJ DNA in complex with RuvA. In the full resolvosome a probable DNA-RuvA(4)-RuvB(12)-RuvC(2) complex forms which resolves the HJ. It depends on Mg(2+) as a cofactor.

It is found in the cytoplasm. It catalyses the reaction Endonucleolytic cleavage at a junction such as a reciprocal single-stranded crossover between two homologous DNA duplexes (Holliday junction).. The RuvA-RuvB-RuvC complex processes Holliday junction (HJ) DNA during genetic recombination and DNA repair. Endonuclease that resolves HJ intermediates. Cleaves cruciform DNA by making single-stranded nicks across the HJ at symmetrical positions within the homologous arms, yielding a 5'-phosphate and a 3'-hydroxyl group; requires a central core of homology in the junction. The consensus cleavage sequence is 5'-(A/T)TT(C/G)-3'. Cleavage occurs on the 3'-side of the TT dinucleotide at the point of strand exchange. HJ branch migration catalyzed by RuvA-RuvB allows RuvC to scan DNA until it finds its consensus sequence, where it cleaves and resolves the cruciform DNA. The protein is Crossover junction endodeoxyribonuclease RuvC of Brucella suis biovar 1 (strain 1330).